The chain runs to 351 residues: D-alanine--D-alanine ligase (351 aa).

In terms of domain architecture, ATP-grasp spans 146–340 (KEIMLYNNIK…YEDLCESIVL (195 aa)). 173–226 (AFDYPMVVKPNSGGSSIGTRIVHDEAELAESLKDAYRFDDEIIVEEFITGREFS) is a binding site for ATP. Residues Asp295, Glu307, and Asn309 each coordinate Mg(2+).

Belongs to the D-alanine--D-alanine ligase family. Mg(2+) serves as cofactor. It depends on Mn(2+) as a cofactor.

It localises to the cytoplasm. It carries out the reaction 2 D-alanine + ATP = D-alanyl-D-alanine + ADP + phosphate + H(+). It functions in the pathway cell wall biogenesis; peptidoglycan biosynthesis. Functionally, cell wall formation. In Pediococcus pentosaceus (strain ATCC 25745 / CCUG 21536 / LMG 10740 / 183-1w), this protein is D-alanine--D-alanine ligase.